Reading from the N-terminus, the 468-residue chain is Argininosuccinate lyase (468 aa).

It belongs to the lyase 1 family. Argininosuccinate lyase subfamily.

It is found in the cytoplasm. It carries out the reaction 2-(N(omega)-L-arginino)succinate = fumarate + L-arginine. It functions in the pathway amino-acid biosynthesis; L-arginine biosynthesis; L-arginine from L-ornithine and carbamoyl phosphate: step 3/3. This Gloeobacter violaceus (strain ATCC 29082 / PCC 7421) protein is Argininosuccinate lyase.